Reading from the N-terminus, the 286-residue chain is 4-diphosphocytidyl-2-C-methyl-D-erythritol kinase (286 aa).

Residue Lys-11 is part of the active site. 94 to 104 (PMGGGIGGGSS) is a binding site for ATP. The active site involves Asp-136.

The protein belongs to the GHMP kinase family. IspE subfamily.

It carries out the reaction 4-CDP-2-C-methyl-D-erythritol + ATP = 4-CDP-2-C-methyl-D-erythritol 2-phosphate + ADP + H(+). The protein operates within isoprenoid biosynthesis; isopentenyl diphosphate biosynthesis via DXP pathway; isopentenyl diphosphate from 1-deoxy-D-xylulose 5-phosphate: step 3/6. Its function is as follows. Catalyzes the phosphorylation of the position 2 hydroxy group of 4-diphosphocytidyl-2C-methyl-D-erythritol. This chain is 4-diphosphocytidyl-2-C-methyl-D-erythritol kinase, found in Pseudomonas putida (strain ATCC 47054 / DSM 6125 / CFBP 8728 / NCIMB 11950 / KT2440).